A 327-amino-acid chain; its full sequence is GMP reductase (327 aa).

C176 acts as the Thioimidate intermediate in catalysis. 205–228 (IIADGGIRTHGDIAKSIRFGASMV) serves as a coordination point for NADP(+).

It belongs to the IMPDH/GMPR family. GuaC type 2 subfamily.

The catalysed reaction is IMP + NH4(+) + NADP(+) = GMP + NADPH + 2 H(+). Functionally, catalyzes the irreversible NADPH-dependent deamination of GMP to IMP. It functions in the conversion of nucleobase, nucleoside and nucleotide derivatives of G to A nucleotides, and in maintaining the intracellular balance of A and G nucleotides. This chain is GMP reductase, found in Streptococcus agalactiae serotype V (strain ATCC BAA-611 / 2603 V/R).